The sequence spans 431 residues: Lipoyl synthase 2, mitochondrial (431 aa).

Residues 21-43 form a disordered region; it reads SPLGKLQEERGEGVAKDPKKDKQ. The span at 26–40 shows a compositional bias: basic and acidic residues; the sequence is LQEERGEGVAKDPKK. [4Fe-4S] cluster is bound by residues cysteine 127, cysteine 132, cysteine 138, cysteine 159, cysteine 163, cysteine 166, and serine 375. One can recognise a Radical SAM core domain in the interval 142 to 364; sequence DEEEGTATAT…EEEAMAMGFL (223 aa).

This sequence belongs to the radical SAM superfamily. Lipoyl synthase family. [4Fe-4S] cluster serves as cofactor.

The protein localises to the mitochondrion. The enzyme catalyses [[Fe-S] cluster scaffold protein carrying a second [4Fe-4S](2+) cluster] + N(6)-octanoyl-L-lysyl-[protein] + 2 oxidized [2Fe-2S]-[ferredoxin] + 2 S-adenosyl-L-methionine + 4 H(+) = [[Fe-S] cluster scaffold protein] + N(6)-[(R)-dihydrolipoyl]-L-lysyl-[protein] + 4 Fe(3+) + 2 hydrogen sulfide + 2 5'-deoxyadenosine + 2 L-methionine + 2 reduced [2Fe-2S]-[ferredoxin]. It functions in the pathway protein modification; protein lipoylation via endogenous pathway; protein N(6)-(lipoyl)lysine from octanoyl-[acyl-carrier-protein]: step 2/2. Functionally, catalyzes the radical-mediated insertion of two sulfur atoms into the C-6 and C-8 positions of the octanoyl moiety bound to the lipoyl domains of lipoate-dependent enzymes, thereby converting the octanoylated domains into lipoylated derivatives. This Trypanosoma cruzi (strain CL Brener) protein is Lipoyl synthase 2, mitochondrial.